The sequence spans 367 residues: MTMEVVLIAVVVSVACALCGVFLVLRRISLMSDAISHSVILGIVLGYFLSRTLSSFVPFVGAVIAGICSVICAELLQKTGMVKSDAAVGLVFPAMFGLGVILVSLYAGNVHLDTDAVLLGEIGLAPLDRVSFFAWSLPRSLVQMGSVLCGLLLLLALFFKELKISTFDPVLATSLGFSPTLINYGLMLAVSITCVGAFDSVGAVLVIALMITPPAAALLLTDNLLLMLVLASLLASCASISGLFLAVKIDGSIAGAMATMAGVLFALVYLFSPKHGVVRRCLVMRALKLDLDVVTLAVHLATHRYTVERSVECAEVHLTEHVSWSARRAARVVRTALRRGMVERHGALLLLTAQGVSLAQARLDVSV.

The next 9 membrane-spanning stretches (helical) occupy residues V5–L25, I28–F48, F56–L76, A87–A107, S140–K160, V170–V190, V201–T221, L224–F244, and G251–F271.

This sequence belongs to the ABC-3 integral membrane protein family.

It localises to the cell membrane. In terms of biological role, part of an ATP-driven transport system TroABCD for zinc. The protein is Zinc transport system membrane protein TroD (troD) of Treponema pallidum (strain Nichols).